The following is a 79-amino-acid chain: Putative sulfur carrier protein TM_0983 (79 aa).

C17 serves as the catalytic Cysteine persulfide intermediate.

It belongs to the sulfur carrier protein TusA family.

This Thermotoga maritima (strain ATCC 43589 / DSM 3109 / JCM 10099 / NBRC 100826 / MSB8) protein is Putative sulfur carrier protein TM_0983.